The following is a 364-amino-acid chain: Histidinol-phosphate aminotransferase 1 (364 aa).

Lysine 211 is subject to N6-(pyridoxal phosphate)lysine.

This sequence belongs to the class-II pyridoxal-phosphate-dependent aminotransferase family. Histidinol-phosphate aminotransferase subfamily. In terms of assembly, homodimer. It depends on pyridoxal 5'-phosphate as a cofactor.

The catalysed reaction is L-histidinol phosphate + 2-oxoglutarate = 3-(imidazol-4-yl)-2-oxopropyl phosphate + L-glutamate. It functions in the pathway amino-acid biosynthesis; L-histidine biosynthesis; L-histidine from 5-phospho-alpha-D-ribose 1-diphosphate: step 7/9. This is Histidinol-phosphate aminotransferase 1 from Legionella pneumophila subsp. pneumophila (strain Philadelphia 1 / ATCC 33152 / DSM 7513).